Reading from the N-terminus, the 879-residue chain is DNA replication licensing factor mcm3 (879 aa).

The MCM domain maps to 306–513 (VFELLSTSLA…KDRALSEHVL (208 aa)). 356–363 (GDPSTAKS) lines the ATP pocket. The short motif at 488–491 (SRFD) is the Arginine finger element. A disordered region spans residues 679–778 (RKKHKKQRLE…STLPATSREL (100 aa)). A compositionally biased stretch (acidic residues) spans 690–713 (GEEFDSEDDNSDDMDIEESEEEMD). The span at 732-752 (TSQSQESGSEIGSSIAGTAGS) shows a compositional bias: low complexity. Residues 754 to 778 (NVGTSNTQLSWPSTHSTLPATSREL) are compositionally biased toward polar residues.

It belongs to the MCM family. Component of the mcm2-7 complex. The complex forms a toroidal hexameric ring with the proposed subunit order mcm2-mcm6-mcm4-mcm7-mcm3-mcm5. The heterodimers of mcm4/mcm6 and mcm3/mcm5 interact with mcm2 and mcm7.

The protein localises to the nucleus. It carries out the reaction ATP + H2O = ADP + phosphate + H(+). Acts as a component of the mcm2-7 complex (mcm complex) which is the putative replicative helicase essential for 'once per cell cycle' DNA replication initiation and elongation in eukaryotic cells. The active ATPase sites in the mcm2-7 ring are formed through the interaction surfaces of two neighboring subunits such that a critical structure of a conserved arginine finger motif is provided in trans relative to the ATP-binding site of the Walker A box of the adjacent subunit. The six ATPase active sites, however, are likely to contribute differentially to the complex helicase activity. The chain is DNA replication licensing factor mcm3 (mcm3) from Schizosaccharomyces pombe (strain 972 / ATCC 24843) (Fission yeast).